A 254-amino-acid polypeptide reads, in one-letter code: Coproheme decarboxylase (254 aa).

Residues R136, 150 to 154, H177, Q190, and S228 contribute to the Fe-coproporphyrin III site; that span reads YPMDK. Y150 is a catalytic residue.

This sequence belongs to the ChdC family. Type 1 subfamily. Fe-coproporphyrin III serves as cofactor.

It carries out the reaction Fe-coproporphyrin III + 2 H2O2 + 2 H(+) = heme b + 2 CO2 + 4 H2O. The enzyme catalyses Fe-coproporphyrin III + H2O2 + H(+) = harderoheme III + CO2 + 2 H2O. It catalyses the reaction harderoheme III + H2O2 + H(+) = heme b + CO2 + 2 H2O. The protein operates within porphyrin-containing compound metabolism; protoheme biosynthesis. In terms of biological role, involved in coproporphyrin-dependent heme b biosynthesis. Catalyzes the decarboxylation of Fe-coproporphyrin III (coproheme) to heme b (protoheme IX), the last step of the pathway. The reaction occurs in a stepwise manner with a three-propionate intermediate. This is Coproheme decarboxylase from Bacillus licheniformis (strain ATCC 14580 / DSM 13 / JCM 2505 / CCUG 7422 / NBRC 12200 / NCIMB 9375 / NCTC 10341 / NRRL NRS-1264 / Gibson 46).